Here is a 594-residue protein sequence, read N- to C-terminus: Choline dehydrogenase, mitochondrial (594 aa).

A mitochondrion-targeting transit peptide spans 1-29 (MWCLLRGLGRPGALARGALGQQQSLGARA). An FAD-binding site is contributed by 42–71 (SYVVVGAGSAGCVLAGRLTEDPAERVLLLE). Lys-436 is subject to N6-succinyllysine. N6-acetyllysine; alternate occurs at positions 484 and 496. An N6-succinyllysine; alternate mark is found at Lys-484 and Lys-496. Catalysis depends on His-511, which acts as the Proton acceptor. Lys-580 carries the post-translational modification N6-acetyllysine.

Belongs to the GMC oxidoreductase family. It depends on FAD as a cofactor.

The protein localises to the mitochondrion inner membrane. The enzyme catalyses choline + A = betaine aldehyde + AH2. It functions in the pathway amine and polyamine biosynthesis; betaine biosynthesis via choline pathway; betaine aldehyde from choline (cytochrome c reductase route): step 1/1. This is Choline dehydrogenase, mitochondrial (CHDH) from Homo sapiens (Human).